A 147-amino-acid polypeptide reads, in one-letter code: Large ribosomal subunit protein uL15 (147 aa).

The segment at 1-57 (MRLHDVKPQKGSKKRKKRVARGISAGQGASAGLGMRGQKSRSGSGTRPGFEGGQQPL) is disordered. Residues 10 to 20 (KGSKKRKKRVA) show a composition bias toward basic residues.

It belongs to the universal ribosomal protein uL15 family. As to quaternary structure, part of the 50S ribosomal subunit.

In terms of biological role, binds to the 23S rRNA. In Nostoc punctiforme (strain ATCC 29133 / PCC 73102), this protein is Large ribosomal subunit protein uL15.